The chain runs to 352 residues: N-acetyl-gamma-glutamyl-phosphate reductase (352 aa).

The active site involves Cys-158.

It belongs to the NAGSA dehydrogenase family. Type 1 subfamily.

Its subcellular location is the cytoplasm. It catalyses the reaction N-acetyl-L-glutamate 5-semialdehyde + phosphate + NADP(+) = N-acetyl-L-glutamyl 5-phosphate + NADPH + H(+). It functions in the pathway amino-acid biosynthesis; L-arginine biosynthesis; N(2)-acetyl-L-ornithine from L-glutamate: step 3/4. Catalyzes the NADPH-dependent reduction of N-acetyl-5-glutamyl phosphate to yield N-acetyl-L-glutamate 5-semialdehyde. This chain is N-acetyl-gamma-glutamyl-phosphate reductase, found in Mycobacterium bovis (strain BCG / Tokyo 172 / ATCC 35737 / TMC 1019).